Reading from the N-terminus, the 126-residue chain is Large ribosomal subunit protein bL12 (126 aa).

The protein belongs to the bacterial ribosomal protein bL12 family. As to quaternary structure, homodimer. Part of the ribosomal stalk of the 50S ribosomal subunit. Forms a multimeric L10(L12)X complex, where L10 forms an elongated spine to which 2 to 4 L12 dimers bind in a sequential fashion. Binds GTP-bound translation factors.

Its function is as follows. Forms part of the ribosomal stalk which helps the ribosome interact with GTP-bound translation factors. Is thus essential for accurate translation. In Paracidovorax citrulli (strain AAC00-1) (Acidovorax citrulli), this protein is Large ribosomal subunit protein bL12.